The chain runs to 376 residues: uncharacterized protein (376 aa).

Low complexity-rich tracts occupy residues 73 to 99 (NNSINNSNSNNNSNNNKNNNNNHNNNN) and 228 to 243 (SSFSSSSSSSESTVSS). Disordered regions lie at residues 73-100 (NNSINNSNSNNNSNNNKNNNNNHNNNNL) and 222-269 (EQDP…KISD).

This is an uncharacterized protein from Saccharomyces cerevisiae (strain ATCC 204508 / S288c) (Baker's yeast).